A 490-amino-acid polypeptide reads, in one-letter code: Betaine aldehyde dehydrogenase (490 aa).

Residues Ile27 and Asp93 each coordinate K(+). 150 to 152 (GAW) is an NAD(+) binding site. The active-site Charge relay system is the Lys162. 176-179 (KPSE) provides a ligand contact to NAD(+). Val180 contacts K(+). 230-233 (GTDT) is a binding site for NAD(+). Leu246 provides a ligand contact to K(+). Residue Glu252 is the Proton acceptor of the active site. Residues Gly254, Cys286, and Glu387 each contribute to the NAD(+) site. Cys286 acts as the Nucleophile in catalysis. A Cysteine sulfenic acid (-SOH) modification is found at Cys286. Residues Lys457 and Gly460 each coordinate K(+). Glu464 serves as the catalytic Charge relay system.

Belongs to the aldehyde dehydrogenase family. Dimer of dimers. K(+) serves as cofactor.

The catalysed reaction is betaine aldehyde + NAD(+) + H2O = glycine betaine + NADH + 2 H(+). Its pathway is amine and polyamine biosynthesis; betaine biosynthesis via choline pathway; betaine from betaine aldehyde: step 1/1. Its function is as follows. Involved in the biosynthesis of the osmoprotectant glycine betaine. Catalyzes the irreversible oxidation of betaine aldehyde to the corresponding acid. The polypeptide is Betaine aldehyde dehydrogenase (Pseudomonas fluorescens (strain Pf0-1)).